Here is a 484-residue protein sequence, read N- to C-terminus: Zinc metalloproteinase homolog-disintegrin albolatin (484 aa).

Residues 1–20 (MIQVLLVTICLAVFPYQGSS) form the signal peptide. Residues 21–191 (IILESGNVND…KTSQLNLPLL (171 aa)) constitute a propeptide that is removed on maturation. Residues Asn-80, Asn-251, and Asn-301 are each glycosylated (N-linked (GlcNAc...) asparagine). The region spanning 194-392 (RCIELVMVAD…WTSYCLYNEP (199 aa)) is the Peptidase M12B domain. 10 disulfide bridges follow: Cys-305/Cys-387, Cys-345/Cys-369, Cys-347/Cys-352, Cys-403/Cys-422, Cys-414/Cys-432, Cys-416/Cys-427, Cys-426/Cys-449, Cys-440/Cys-446, Cys-445/Cys-470, and Cys-458/Cys-477. Positions 400-484 (PPVCGNYYLE…GDCPWIGYYG (85 aa)) constitute a Disintegrin domain. Positions 462-464 (KGD) match the Cell attachment site; atypical (KGD) motif.

The protein belongs to the venom metalloproteinase (M12B) family. P-II subfamily. P-IIb sub-subfamily. Homodimer; disulfide-linked (disintegrin). Expressed by the venom gland.

It is found in the secreted. The function of this complete protein has not been studied, but it may be similar to the function of the disintegrin domain. A recombinant protein of this domain (409-484) inhibits collagen-induced human platelet aggregation, without having effect on ADP-induced aggregation. It may act either by blocking the binding of fibrinogen to the platelet receptor GPIIb/GPIIIa (ITGA2B/ITGB3) or by blocking the binding of collagen to the integrin alpha-2/beta-1 complex (ITGA2/ITGB1). In Trimeresurus albolabris (White-lipped pit viper), this protein is Zinc metalloproteinase homolog-disintegrin albolatin.